Here is a 200-residue protein sequence, read N- to C-terminus: NAD(P)H dehydrogenase (quinone) (200 aa).

Positions 4 to 191 constitute a Flavodoxin-like domain; the sequence is VLVLYYSSYG…DIARYQGKHV (188 aa). FMN contacts are provided by residues 10–15 and 79–81; these read SSYGHV and TRF. Tyr12 provides a ligand contact to NAD(+). Trp99 contributes to the substrate binding site. FMN is bound by residues 114-120 and His135; that span reads STGTQHG.

This sequence belongs to the WrbA family. FMN is required as a cofactor.

It carries out the reaction a quinone + NADH + H(+) = a quinol + NAD(+). It catalyses the reaction a quinone + NADPH + H(+) = a quinol + NADP(+). The chain is NAD(P)H dehydrogenase (quinone) from Burkholderia cenocepacia (strain ATCC BAA-245 / DSM 16553 / LMG 16656 / NCTC 13227 / J2315 / CF5610) (Burkholderia cepacia (strain J2315)).